The sequence spans 227 residues: Basic leucine zipper 24 (227 aa).

Residues 44 to 68 (EDKDQDRVTRGCSHTHSCNPPGPED) are disordered. A bZIP domain is found at 94-160 (DSSNKKRLCG…IRLRALLVEM (67 aa)). A basic motif region spans residues 98–118 (KKRLCGNREAVRKYREKKKAR). Residues 122-129 (LEDEVMRL) form a leucine-zipper region.

Homodimer. As to expression, expressed in young leaves and cauline leaves.

The protein localises to the nucleus. The protein resides in the cytoplasm. Transcription factor involved in the regulation of salt stress response. Functions as a negative transcriptional regulator of salt stress acclimation response by regulating cation homeostasis. Negatively regulates the expression of genes contributing to ion and osmotic homeostasis during salt stress, such as the Na(+) transporter HKT1, the Na(+)/H(+) antiporter SOS1, the aquaporin PIP2-1 and the glutamine synthetase GLN1-3. In addition, targets genes with functions in plant growth and development, such as argonaute 4 (AGO4) and cyclophilin 19 (CYP19). The sequence is that of Basic leucine zipper 24 from Arabidopsis thaliana (Mouse-ear cress).